The primary structure comprises 291 residues: U7 snRNA-associated Sm-like protein LSm11 (291 aa).

Residues 55–84 are disordered; that stretch reads ARGRARGAQRGQSRGPGGKRKGRKPEPDPE. One can recognise a Sm domain in the interval 124-199; the sequence is SPLGELNRCV…LTLTRLFDRL (76 aa). The SM stretch occupies residues 155–289; sequence GFIVAFDKFW…RGENVLLVHI (135 aa). The interval 203-266 is disordered; it reads EPGSHDPAKG…RRNRKEKVDY (64 aa). The segment covering 251–261 has biased composition (basic residues); that stretch reads NRPKQRRRNRK.

It belongs to the snRNP Sm proteins family. As to quaternary structure, component of the heptameric ring U7 snRNP complex.

It is found in the nucleus. Component of the U7 snRNP complex that is involved in the histone 3'-end pre-mRNA processing. Increases U7 snRNA levels but not histone 3'-end pre-mRNA processing activity, when overexpressed. Binds specifically to the Sm-binding site of U7 snRNA. The protein is U7 snRNA-associated Sm-like protein LSm11 of Xenopus laevis (African clawed frog).